The sequence spans 675 residues: Protein PALS1 (675 aa).

2 disordered regions span residues 1 to 32 (MTTS…HPKH) and 52 to 79 (RSAQ…KQEL). Positions 1 to 345 (MTTSYMNGHV…QQIKPPPAKE (345 aa)) are required for the correct localization of PALS1 and PATJ at cell-cell contacts and the normal formation of tight junctions and adherens junctions. Phosphoserine occurs at positions 14 and 25. Positions 21 to 140 (LGLASPEEHP…LKHIQHTLVD (120 aa)) are interaction with PARD6B. Residues 54–79 (AQLERIRQQQEDMRRRREEEGKKQEL) are compositionally biased toward basic and acidic residues. Phosphoserine is present on residues Ser-83 and Ser-84. L27 domains lie at 120–177 (KILE…NKAS) and 179–235 (PFPL…MQLE). The interaction with LIN7C stretch occupies residues 181-243 (PLIANVQDLV…LEPITDERVY (63 aa)). The PDZ domain occupies 256-336 (IVRIEKARDI…TLTFVLIPSQ (81 aa)). The 73-residue stretch at 345–417 (ETVIHVKAHF…PGKSFQQQRE (73 aa)) folds into the SH3 domain. In terms of domain architecture, Guanylate kinase-like spans 479–660 (KRPIILIGPQ…AYQELLRLIN (182 aa)). 486–493 (GPQNCGQN) provides a ligand contact to ATP.

This sequence belongs to the MAGUK family. As to quaternary structure, heterodimer with MPP1. Forms a heterotrimeric complex composed of PALS1, LIN7B and PATJ; the N-terminal L27 domain of PALS1 interacts with the L27 domain of PATJ and the C-terminal L27 domain of PALS1 interacts with the L27 domain of LIN7B. Component of a complex composed of PALS1, CRB1 and MPP4. Component of a complex whose core is composed of ARHGAP17, AMOT, PALS1, PATJ and PARD3/PAR3. Component of a complex composed of PALS1, CRB1 and EPB41L5. Within the complex, interacts (via HOOK domain) with EPB41L5 (via FERM domain), and interacts with CRB1 (via intracellular domain). Component of a complex composed of PALS1, MPP3 and CRB1; PALS1 acts as a bridging protein between MPP3 (via guanylate kinase-like domain) and CRB1. Component of a complex composed of CRB3, PALS1 and PATJ. As part of the Crumbs complex; interacts with WWP1, the interaction is enhanced by AMOTL2 and facilitates WWP1 localization to the plasma membrane. The Crumbs complex promotes monoubiquitination of AMOTL2 by WWP1, which activates the Hippo signaling pathway. Interacts (via PDZ domain) with PATJ (via N-terminus). Interacts with EZR. Interacts (via PDZ domain) with CRB1 (via C-terminal ERLI motif). While the PDZ domain is sufficient for interaction with CRB1, the adjacent SH3 and guanylate kinase-like domains are likely to contribute to a high affinity interaction. Interacts with WWTR1/TAZ (via WW domain). Interacts with MPP7. Interacts (via PDZ domain) with CRB3 (via C-terminus). Interacts with LIN7C. Interacts with MPDZ. Interacts with PARD6B. Interacts with SC6A1. Interacts with CDH5; the interaction promotes PALS1 localization to cell junctions and is required for CDH5-mediated vascular lumen formation and endothelial cell. Interacts with NPHP1 (via coiled coil and SH3 domains). Interacts with NPHP4. Interacts with CRB2.

It is found in the golgi apparatus. The protein localises to the cell membrane. Its subcellular location is the endomembrane system. It localises to the cell junction. The protein resides in the tight junction. It is found in the adherens junction. The protein localises to the cell projection. Its subcellular location is the axon. It localises to the perikaryon. The protein resides in the apical cell membrane. Plays a role in tight junction biogenesis and in the establishment of cell polarity in epithelial cells. Also involved in adherens junction biogenesis by ensuring correct localization of the exocyst complex protein EXOC4/SEC8 which allows trafficking of adherens junction structural component CDH1 to the cell surface. Plays a role through its interaction with CDH5 in vascular lumen formation and endothelial membrane polarity. Required during embryonic and postnatal retinal development. Required for the maintenance of cerebellar progenitor cells in an undifferentiated proliferative state, preventing premature differentiation, and is required for cerebellar histogenesis, fissure formation, cerebellar layer organization and cortical development. Plays a role in neuronal progenitor cell survival, potentially via promotion of mTOR signaling. Plays a role in the radial and longitudinal extension of the myelin sheath in Schwann cells. May modulate SC6A1/GAT1-mediated GABA uptake by stabilizing the transporter. May play a role in the T-cell receptor-mediated activation of NF-kappa-B. Required for localization of EZR to the apical membrane of parietal cells and may play a role in the dynamic remodeling of the apical cytoskeleton. Required for the normal polarized localization of the vesicular marker STX4. Required for the correct trafficking of the myelin proteins PMP22 and MAG. Involved in promoting phosphorylation and cytoplasmic retention of transcriptional coactivators YAP1 and WWTR1/TAZ which leads to suppression of TGFB1-dependent transcription of target genes such as CCN2/CTGF, SERPINE1/PAI1, SNAI1/SNAIL1 and SMAD7. This is Protein PALS1 from Rattus norvegicus (Rat).